The sequence spans 676 residues: MTQLTENTDELHSIRLAIDPNLITLPIGSKSTSPHSNSTSDGNPESHNTENEEVDNKAGSLPPEQFSNNSAKLIVNPYEKYGRMSLGQLIPLISQQRGPNFKFADINEDILKQELAIENDNGKQESKDDTKAEDGIDTMDIDQNDNSEANTNDIGYNEWSNEPKEDTGILDNTQDTNINGEMESQLTQEEFNKIRKVMLEHINMAMNESSLAMEFVSLLLSPVRESTAVSSMSPFLKKTVNPGSLNSEKVKMPAVSRRDKLSLSILSRGWKLRALNEARAILKKNFTEISSSLKQEHHYWSSIAYNISNKDVLFKIRDKQTTKRSLGLKYGYEDSGSTFRNDRGTAILRGTDEANGLELIPLTLGRTSTVGSVYKGGKFLRVRIFTKIESEGDYILSGESSLDKLFKNHSENSDSKNDDVRLQISKLKFFIFEQELMHQLKKECAYLISYGVTVENEHKIVIELPNEKFEIEYLSLDDDSVVNHEQDAPKANDRRANLMLVTLRMLLIVIYKKNLRQKMVSNTRKHIASTEKDILLIRPLLGKMRHSNHKKLIRKILKECVLEVVPDTELQERSIQSLDKEDFETFDLQDAHIVKLTKDINAFRNVLDVGKTEFTIDMKQSGKLSLILESPNYCNAQVSIKYDNQTSNTHFNTVSTEFKEVEEFLHFLISTYVNPE.

Disordered stretches follow at residues 27 to 68 (IGSK…QFSN) and 117 to 176 (IEND…TQDT). Positions 29 to 40 (SKSTSPHSNSTS) are enriched in low complexity. Composition is skewed to basic and acidic residues over residues 47 to 56 (HNTENEEVDN) and 120 to 134 (DNGKQESKDDTKAED). Over residues 135–145 (GIDTMDIDQND) the composition is skewed to acidic residues. The span at 146 to 160 (NSEANTNDIGYNEWS) shows a compositional bias: polar residues.

It belongs to the Mediator complex subunit 17 family. In terms of assembly, component of the Mediator complex.

The protein localises to the nucleus. Its function is as follows. Component of the Mediator complex, a coactivator involved in the regulated transcription of nearly all RNA polymerase II-dependent genes. Mediator functions as a bridge to convey information from gene-specific regulatory proteins to the basal RNA polymerase II transcription machinery. Mediator is recruited to promoters by direct interactions with regulatory proteins and serves as a scaffold for the assembly of a functional preinitiation complex with RNA polymerase II and the general transcription factors. This Candida glabrata (strain ATCC 2001 / BCRC 20586 / JCM 3761 / NBRC 0622 / NRRL Y-65 / CBS 138) (Yeast) protein is Mediator of RNA polymerase II transcription subunit 17 (SRB4).